The chain runs to 241 residues: Serine protease 58 (241 aa).

An N-terminal signal peptide occupies residues 1–17; that stretch reads MKFILLWALLNLTVALA. In terms of domain architecture, Peptidase S1 spans 18 to 239; it reads FNPDYTVSST…YIPWIENVIQ (222 aa). A disulfide bridge connects residues cysteine 41 and cysteine 57. Catalysis depends on charge relay system residues histidine 56 and aspartate 101. Disulfide bonds link cysteine 133–cysteine 201, cysteine 165–cysteine 180, and cysteine 191–cysteine 215. Residues asparagine 156 and asparagine 173 are each glycosylated (N-linked (GlcNAc...) asparagine). Catalysis depends on serine 195, which acts as the Charge relay system.

This sequence belongs to the peptidase S1 family.

The protein localises to the secreted. It carries out the reaction Preferential cleavage: Arg-|-Xaa, Lys-|-Xaa.. The chain is Serine protease 58 (PRSS58) from Homo sapiens (Human).